A 653-amino-acid chain; its full sequence is Polyadenylate-binding protein, cytoplasmic and nuclear (653 aa).

A compositionally biased stretch (basic and acidic residues) spans 1–10 (MPSTDLKKQA). The tract at residues 1-77 (MPSTDLKKQA…SVATPSGTAP (77 aa)) is disordered. Positions 17-27 (DVNTNNEAVES) are enriched in polar residues. Residues 53–68 (AAEPSESTSTPTNASS) show a composition bias toward low complexity. In terms of domain architecture, RRM 1 spans 80–158 (ASLYVGELDP…RPCRIMWSQR (79 aa)). The residue at position 167 (Thr167) is a Phosphothreonine. RRM domains are found at residues 168–245 (GNVF…HHVS), 261–338 (TNVY…RAQK), and 364–441 (VNLF…LAQR). The region spanning 569-646 (PERFTAADLA…AIGVLQEFVD (78 aa)) is the PABC domain.

This sequence belongs to the polyadenylate-binding protein type-1 family. Interacts with cid13.

The protein localises to the cytoplasm. It localises to the nucleus. Its function is as follows. Binds the poly(A) tail of mRNA. Appears to be an important mediator of the multiple roles of the poly(A) tail in mRNA biogenesis, stability and translation. In the nucleus, involved in both mRNA cleavage and polyadenylation. Is also required for efficient mRNA export to the cytoplasm. Acts in concert with a poly(A)-specific nuclease (PAN) to affect poly(A) tail shortening, which may occur concomitantly with either nucleocytoplasmic mRNA transport or translational initiation. In the cytoplasm, stimulates translation initiation and regulates mRNA decay through translation termination-coupled poly(A) shortening, probably mediated by PAN. This chain is Polyadenylate-binding protein, cytoplasmic and nuclear (pab1), found in Schizosaccharomyces pombe (strain 972 / ATCC 24843) (Fission yeast).